Consider the following 136-residue polypeptide: uncharacterized protein (136 aa).

The interval Met-1–Arg-51 is disordered. Over residues Gln-37–Ser-46 the composition is skewed to basic and acidic residues.

This is an uncharacterized protein from Homo sapiens (Human).